The sequence spans 102 residues: MEIKQIAVAGSLESSDMMITISPNDGQGIVLELDSSVEKQFGNHIRALIKTTLARLGVESATIEAVDKGALDCTIQARTIAAVHRAAGVEHYNWKEIDSWNA.

An O-(phosphoribosyl dephospho-coenzyme A)serine modification is found at Ser-14.

Belongs to the CitD family. As to quaternary structure, oligomer with a subunit composition of (alpha,beta,gamma)6.

The protein resides in the cytoplasm. In terms of biological role, covalent carrier of the coenzyme of citrate lyase. This Streptococcus equi subsp. equi (strain 4047) protein is Citrate lyase acyl carrier protein.